The sequence spans 166 residues: Ubiquitin-conjugating enzyme E2 7 (166 aa).

N-acetylalanine is present on alanine 2. The UBC core domain maps to 4 to 164 (QASLLLQKQL…VSRCVRKSQE (161 aa)). The Glycyl thioester intermediate role is filled by cysteine 89.

It belongs to the ubiquitin-conjugating enzyme family.

The enzyme catalyses S-ubiquitinyl-[E1 ubiquitin-activating enzyme]-L-cysteine + [E2 ubiquitin-conjugating enzyme]-L-cysteine = [E1 ubiquitin-activating enzyme]-L-cysteine + S-ubiquitinyl-[E2 ubiquitin-conjugating enzyme]-L-cysteine.. It functions in the pathway protein modification; protein ubiquitination. Accepts the ubiquitin from the E1 complex and catalyzes its covalent attachment to other proteins. Involved in the formation of multiubiquitin chains. Signal the protein for selective degradation. The chain is Ubiquitin-conjugating enzyme E2 7 (UBC7) from Arabidopsis thaliana (Mouse-ear cress).